Reading from the N-terminus, the 396-residue chain is Acetate kinase (396 aa).

Asn-7 is a Mg(2+) binding site. Position 14 (Lys-14) interacts with ATP. Arg-91 is a binding site for substrate. The Proton donor/acceptor role is filled by Asp-148. Residues 208–212 (HLGNG), 283–285 (DFR), and 331–335 (GIGEN) each bind ATP. Glu-384 serves as a coordination point for Mg(2+).

Belongs to the acetokinase family. In terms of assembly, homodimer. Mg(2+) serves as cofactor. Requires Mn(2+) as cofactor.

Its subcellular location is the cytoplasm. It carries out the reaction acetate + ATP = acetyl phosphate + ADP. It participates in metabolic intermediate biosynthesis; acetyl-CoA biosynthesis; acetyl-CoA from acetate: step 1/2. Catalyzes the formation of acetyl phosphate from acetate and ATP. Can also catalyze the reverse reaction. The protein is Acetate kinase of Desulforamulus reducens (strain ATCC BAA-1160 / DSM 100696 / MI-1) (Desulfotomaculum reducens).